A 194-amino-acid polypeptide reads, in one-letter code: Cell division protein SepF (194 aa).

Disordered stretches follow at residues 35-54 (DHRS…DSSP) and 159-194 (SAPS…AGGL).

It belongs to the SepF family. In terms of assembly, homodimer. Interacts with FtsZ.

The protein resides in the cytoplasm. Cell division protein that is part of the divisome complex and is recruited early to the Z-ring. Probably stimulates Z-ring formation, perhaps through the cross-linking of FtsZ protofilaments. Its function overlaps with FtsA. In Prochlorococcus marinus (strain MIT 9313), this protein is Cell division protein SepF.